The primary structure comprises 236 residues: MPGSAGWRKVFGGTGGATGALPRHGRGSIVYARSTTIEAQPLSVDIGIAHVRDVVMPALQEIDGCVGVSLLVDRQSGRCIATSAWETLEAMRASVERVAPIRDRAALMFAGSARVEEWDIALLHRDHPSHEGACVRATWLKVVPDQLGRSLEFYRTSVLPELESLDGFCSASLMVDHPACRRAVSCSTFDSMDAMARNRDRASELRSRRVRELGAEVLDVAEFELAIAHLRVPELV.

This sequence to M.tuberculosis Rv2557.

This is an uncharacterized protein from Mycobacterium tuberculosis (strain CDC 1551 / Oshkosh).